We begin with the raw amino-acid sequence, 177 residues long: Large ribosomal subunit protein uL6 (177 aa).

This sequence belongs to the universal ribosomal protein uL6 family. As to quaternary structure, part of the 50S ribosomal subunit.

In terms of biological role, this protein binds to the 23S rRNA, and is important in its secondary structure. It is located near the subunit interface in the base of the L7/L12 stalk, and near the tRNA binding site of the peptidyltransferase center. This is Large ribosomal subunit protein uL6 from Rickettsia typhi (strain ATCC VR-144 / Wilmington).